A 178-amino-acid chain; its full sequence is Ribosome maturation factor RimM (178 aa).

Residues 100–178 (DEGEFYWHQL…EIRVDWDADF (79 aa)) enclose the PRC barrel domain.

It belongs to the RimM family. Binds ribosomal protein uS19.

The protein resides in the cytoplasm. An accessory protein needed during the final step in the assembly of 30S ribosomal subunit, possibly for assembly of the head region. Essential for efficient processing of 16S rRNA. May be needed both before and after RbfA during the maturation of 16S rRNA. It has affinity for free ribosomal 30S subunits but not for 70S ribosomes. This is Ribosome maturation factor RimM from Azotobacter vinelandii (strain DJ / ATCC BAA-1303).